Consider the following 503-residue polypeptide: Glutamate--tRNA ligase 1 (503 aa).

The 'HIGH' region signature appears at 17–27; that stretch reads PSPTGFLHIGN. Residues 261-265 carry the 'KMSKS' region motif; it reads KLSKR. Lys-264 contributes to the ATP binding site.

This sequence belongs to the class-I aminoacyl-tRNA synthetase family. Glutamate--tRNA ligase type 1 subfamily. As to quaternary structure, monomer.

It localises to the cytoplasm. The enzyme catalyses tRNA(Glu) + L-glutamate + ATP = L-glutamyl-tRNA(Glu) + AMP + diphosphate. Its function is as follows. Catalyzes the attachment of glutamate to tRNA(Glu) in a two-step reaction: glutamate is first activated by ATP to form Glu-AMP and then transferred to the acceptor end of tRNA(Glu). This is Glutamate--tRNA ligase 1 from Levilactobacillus brevis (strain ATCC 367 / BCRC 12310 / CIP 105137 / JCM 1170 / LMG 11437 / NCIMB 947 / NCTC 947) (Lactobacillus brevis).